The following is a 472-amino-acid chain: Serine incorporator 3 (472 aa).

The Extracellular portion of the chain corresponds to Met1–Lys95. Asn34 carries an N-linked (GlcNAc...) asparagine glycan. A helical transmembrane segment spans residues Ala96 to Leu116. Topologically, residues Asn117 to Gly131 are cytoplasmic. A helical transmembrane segment spans residues Phe132 to Gly152. Residues Gly153 to Ala158 are Extracellular-facing. Residues Trp159–Val179 traverse the membrane as a helical segment. The Cytoplasmic segment spans residues Asp180 to Tyr202. Residues Ala203–Leu223 form a helical membrane-spanning segment. Over Tyr224–Phe238 the chain is Extracellular. Residues Phe239–Ile259 form a helical membrane-spanning segment. The Cytoplasmic segment spans residues Gln260 to Ser328. Residues Gly329–Tyr349 traverse the membrane as a helical segment. Residues Ser350 to Ser405 are Extracellular-facing. N-linked (GlcNAc...) asparagine glycosylation is present at Asn354. Ser370 is modified (phosphoserine). Residue Asn403 is glycosylated (N-linked (GlcNAc...) asparagine). Residues Met406–Tyr426 traverse the membrane as a helical segment. Topologically, residues Ser427–Lys445 are cytoplasmic. A helical transmembrane segment spans residues Ile446 to Leu466. The Extracellular portion of the chain corresponds to Thr467–Ser472.

It belongs to the TDE1 family. N-glycosylated.

It is found in the cell membrane. It localises to the golgi apparatus membrane. The enzyme catalyses a 1,2-diacyl-sn-glycero-3-phospho-L-serine(in) = a 1,2-diacyl-sn-glycero-3-phospho-L-serine(out). It catalyses the reaction a 1,2-diacyl-sn-glycero-3-phosphocholine(in) = a 1,2-diacyl-sn-glycero-3-phosphocholine(out). It carries out the reaction a 1,2-diacyl-sn-glycero-3-phosphoethanolamine(in) = a 1,2-diacyl-sn-glycero-3-phosphoethanolamine(out). Functionally, restriction factor required to restrict infectivity of gammaretroviruses: acts by inhibiting an early step of viral infection. Impairs the penetration of the viral particle into the cytoplasm. Non-ATP-dependent, non-specific lipid transporter for phosphatidylserine, phosphatidylcholine, and phosphatidylethanolamine. Functions as a scramblase that flips lipids in both directions across the membrane. Phospholipid scrambling results in gammaretroviral surface exposure of phosphatidylserine and loss of membrane asymmetry, which leads to loss of infectivity. The polypeptide is Serine incorporator 3 (SERINC3) (Bos taurus (Bovine)).